The chain runs to 271 residues: Cartilage-associated protein (271 aa).

Residues 1–15 (MWRTLLAALLATAGA) form the signal peptide. The N-linked (GlcNAc...) asparagine glycan is linked to N76.

Belongs to the leprecan family. As to expression, found in articular chondrocytes. Expressed in a variety of tissues.

It is found in the secreted. The protein resides in the extracellular space. Its subcellular location is the extracellular matrix. In terms of biological role, necessary for efficient 3-hydroxylation of fibrillar collagen prolyl residues. This chain is Cartilage-associated protein (CRTAP), found in Gallus gallus (Chicken).